The sequence spans 324 residues: o-succinylbenzoate synthase (324 aa).

Catalysis depends on lysine 135, which acts as the Proton donor. Residues aspartate 163, glutamate 192, and aspartate 215 each coordinate Mg(2+). Catalysis depends on lysine 237, which acts as the Proton acceptor.

This sequence belongs to the mandelate racemase/muconate lactonizing enzyme family. MenC type 1 subfamily. The cofactor is a divalent metal cation.

It carries out the reaction (1R,6R)-6-hydroxy-2-succinyl-cyclohexa-2,4-diene-1-carboxylate = 2-succinylbenzoate + H2O. It functions in the pathway quinol/quinone metabolism; 1,4-dihydroxy-2-naphthoate biosynthesis; 1,4-dihydroxy-2-naphthoate from chorismate: step 4/7. It participates in quinol/quinone metabolism; menaquinone biosynthesis. Its function is as follows. Converts 2-succinyl-6-hydroxy-2,4-cyclohexadiene-1-carboxylate (SHCHC) to 2-succinylbenzoate (OSB). The polypeptide is o-succinylbenzoate synthase (Aliivibrio fischeri (strain MJ11) (Vibrio fischeri)).